A 320-amino-acid polypeptide reads, in one-letter code: G-protein coupled receptor homolog FPV021 (320 aa).

The Extracellular portion of the chain corresponds to methionine 1–threonine 18. The chain crosses the membrane as a helical span at residues leucine 19 to isoleucine 39. The Cytoplasmic portion of the chain corresponds to tryptophan 40–threonine 52. A helical membrane pass occupies residues isoleucine 53 to isoleucine 73. Residues threonine 74 to isoleucine 91 lie on the Extracellular side of the membrane. Cysteines 89 and 167 form a disulfide. Residues glycine 92–isoleucine 112 form a helical membrane-spanning segment. Residues aspartate 113–isoleucine 133 are Cytoplasmic-facing. The helical transmembrane segment at methionine 134–phenylalanine 154 threads the bilayer. Residues lysine 155 to serine 188 lie on the Extracellular side of the membrane. Asparagine 175 is a glycosylation site (N-linked (GlcNAc...) asparagine; by host). A helical membrane pass occupies residues leucine 189 to phenylalanine 209. The Cytoplasmic portion of the chain corresponds to lysine 210–threonine 222. The chain crosses the membrane as a helical span at residues isoleucine 223–isoleucine 243. Residues aspartate 244–alanine 260 are Extracellular-facing. Residues proline 261–valine 281 form a helical membrane-spanning segment. Residues glycine 282–asparagine 320 are Cytoplasmic-facing.

It belongs to the G-protein coupled receptor 1 family.

The protein resides in the host cell membrane. This is G-protein coupled receptor homolog FPV021 from Vertebrata (FPV).